The primary structure comprises 209 residues: Auxin-binding protein ABP19a (209 aa).

The signal sequence occupies residues 1–18 (MIFPIFFTFFLLLSSSHA). The cysteines at positions 24 and 39 are disulfide-linked. The region spanning 53 to 199 (SGLGIAGNTT…TTFLDAAQIK (147 aa)) is the Cupin type-1 domain. Asparagine 60 is a glycosylation site (N-linked (GlcNAc...) asparagine). Residues histidine 101, histidine 103, glutamate 108, and histidine 147 each coordinate Mn(2+).

Belongs to the germin family. Interacts with ABP20.

It is found in the secreted. The protein resides in the extracellular space. The protein localises to the apoplast. Its subcellular location is the cell wall. In terms of biological role, probable receptor for the plant growth-promoting hormone auxin. This chain is Auxin-binding protein ABP19a (ABP19A), found in Prunus persica (Peach).